A 319-amino-acid chain; its full sequence is N-acyl-aromatic-L-amino acid amidohydrolase (carboxylate-forming) (319 aa).

A hydrolytic domain region spans residues 1–210 (MCSLPGSRKP…SILDFIELFN (210 aa)). Residues H21 and E24 each coordinate Zn(2+). Substrate contacts are provided by residues R63 and 70 to 71 (NR). H116 lines the Zn(2+) pocket. Substrate is bound by residues E178 and Y288. The tract at residues 211–318 (QGMEFPAFEM…PGLTPSSTQT (108 aa)) is shielding domain. T318 bears the Phosphothreonine mark.

Belongs to the AspA/AstE family. Aspartoacylase subfamily. In terms of assembly, exists as a mixture of homodimers and homotetramer, both catalytically active. It depends on Zn(2+) as a cofactor.

The protein resides in the apical cell membrane. The protein localises to the cytoplasm. It carries out the reaction an N-acyl-aromatic L-alpha-amino acid + H2O = an aromatic L-alpha-amino acid + a carboxylate. It catalyses the reaction an N-acetyl-L-cysteine-S-conjugate + H2O = an S-substituted L-cysteine + acetate. Plays an important role in deacetylating mercapturic acids in kidney proximal tubules. Also acts on N-acetyl-aromatic amino acids. In Rattus norvegicus (Rat), this protein is N-acyl-aromatic-L-amino acid amidohydrolase (carboxylate-forming) (Acy3).